The following is a 277-amino-acid chain: Adaptin ear-binding coat-associated protein 1 (277 aa).

The interval 164 to 277 (GNITAKKGGT…APQPSNWVQF (114 aa)) is disordered. Residues 187-201 (LPPPPGGKVTIPPPS) are compositionally biased toward pro residues. The residue at position 211 (threonine 211) is a Phosphothreonine. Residues 222-234 (SNDSDILLDLDSP) are compositionally biased toward low complexity. Pro residues predominate over residues 235-245 (APVPTSAPAPA). 2 short sequence motifs (WXXF motif) span residues 254 to 257 (WGDF) and 274 to 277 (WVQF). A compositionally biased stretch (polar residues) spans 258–277 (STASSSVPNQAPQPSNWVQF).

The protein belongs to the NECAP family. In terms of assembly, interacts with AP1G1 and AP2A1 components of the adapter protein complexes AP-1 and AP-2. Interacts with the GAE domain proteins GGA1, GGA2 and GGA3. Interacts with AP2A2. As to expression, expressed predominantly in brain (at protein level).

The protein localises to the cytoplasmic vesicle. Its subcellular location is the clathrin-coated vesicle membrane. It localises to the cell membrane. In terms of biological role, involved in endocytosis. This is Adaptin ear-binding coat-associated protein 1 (Necap1) from Rattus norvegicus (Rat).